We begin with the raw amino-acid sequence, 431 residues long: Protein translocase subunit SecY (431 aa).

A run of 10 helical transmembrane segments spans residues 18-38 (IIFT…PVPH), 64-84 (LFNF…SIII), 116-136 (FTIV…NNMA), 146-166 (VGTY…LMWL), 175-195 (VGNG…PQTI), 214-234 (IIKV…VIFI), 262-282 (LPLK…AFIT), 309-329 (PVGM…YAFV), 369-389 (FVGS…VNIA), and 390-410 (GLPS…GVAL).

The protein belongs to the SecY/SEC61-alpha family. As to quaternary structure, component of the Sec protein translocase complex. Heterotrimer consisting of SecY, SecE and SecG subunits. The heterotrimers can form oligomers, although 1 heterotrimer is thought to be able to translocate proteins. Interacts with the ribosome. Interacts with SecDF, and other proteins may be involved. Interacts with SecA.

It is found in the cell membrane. Its function is as follows. The central subunit of the protein translocation channel SecYEG. Consists of two halves formed by TMs 1-5 and 6-10. These two domains form a lateral gate at the front which open onto the bilayer between TMs 2 and 7, and are clamped together by SecE at the back. The channel is closed by both a pore ring composed of hydrophobic SecY resides and a short helix (helix 2A) on the extracellular side of the membrane which forms a plug. The plug probably moves laterally to allow the channel to open. The ring and the pore may move independently. The polypeptide is Protein translocase subunit SecY (Bacillus licheniformis (strain ATCC 14580 / DSM 13 / JCM 2505 / CCUG 7422 / NBRC 12200 / NCIMB 9375 / NCTC 10341 / NRRL NRS-1264 / Gibson 46)).